The primary structure comprises 226 residues: MEKLTIGVLSLQGNFQSHINHFLQLQNPSLKVIEVRNKTNLRECDGIVIPGGESTTLRKCMSYDNDSLYNALKNYIHVKKKPVWGTCAGCILLSEKVEKNKDDNIENEYGNDFSLGGLDIEITRNYYGSQNDSFICSLDIKSQDPIFKKNIRAPCIRAPFIKKISSDKVVTIATFSHESFGKNIIGAVEQDNCMGTIFHPELMPYTCFHDYFLEKVKKHIKDSREA.

52–54 is a binding site for L-glutamine; that stretch reads GES. Catalysis depends on Cys87, which acts as the Nucleophile. L-glutamine is bound by residues Arg124 and 156 to 157; that span reads IR. Active-site charge relay system residues include His199 and Glu201.

It belongs to the glutaminase PdxT/SNO family. In the presence of PdxS, forms a dodecamer of heterodimers. Only shows activity in the heterodimer.

The enzyme catalyses aldehydo-D-ribose 5-phosphate + D-glyceraldehyde 3-phosphate + L-glutamine = pyridoxal 5'-phosphate + L-glutamate + phosphate + 3 H2O + H(+). It catalyses the reaction L-glutamine + H2O = L-glutamate + NH4(+). It participates in cofactor biosynthesis; pyridoxal 5'-phosphate biosynthesis. Catalyzes the hydrolysis of glutamine to glutamate and ammonia as part of the biosynthesis of pyridoxal 5'-phosphate. The resulting ammonia molecule is channeled to the active site of PdxS. The sequence is that of Pyridoxal 5'-phosphate synthase subunit Pdx2 from Plasmodium berghei.